Here is a 378-residue protein sequence, read N- to C-terminus: Chaperone protein DnaJ (378 aa).

The J domain occupies 5–70 (DYYESLGVAK…QKRAAYDQYG (66 aa)). The CR-type zinc finger occupies 133-211 (GVTKEIRIPA…CHGHGRVEKS (79 aa)). Residues Cys146, Cys149, Cys163, Cys166, Cys185, Cys188, Cys199, and Cys202 each coordinate Zn(2+). CXXCXGXG motif repeat units follow at residues 146-153 (CDVCHGNG), 163-170 (CPTCHGNG), 185-192 (CPHCHGRG), and 199-206 (CVKCHGHG).

The protein belongs to the DnaJ family. As to quaternary structure, homodimer. Requires Zn(2+) as cofactor.

The protein resides in the cytoplasm. In terms of biological role, participates actively in the response to hyperosmotic and heat shock by preventing the aggregation of stress-denatured proteins and by disaggregating proteins, also in an autonomous, DnaK-independent fashion. Unfolded proteins bind initially to DnaJ; upon interaction with the DnaJ-bound protein, DnaK hydrolyzes its bound ATP, resulting in the formation of a stable complex. GrpE releases ADP from DnaK; ATP binding to DnaK triggers the release of the substrate protein, thus completing the reaction cycle. Several rounds of ATP-dependent interactions between DnaJ, DnaK and GrpE are required for fully efficient folding. Also involved, together with DnaK and GrpE, in the DNA replication of plasmids through activation of initiation proteins. This chain is Chaperone protein DnaJ, found in Pectobacterium carotovorum subsp. carotovorum (strain PC1).